The primary structure comprises 565 residues: Tyrosine-protein phosphatase non-receptor type 5 (565 aa).

A compositionally biased stretch (basic and acidic residues) spans 1-16 (MNYEGARSERENHAAD). The segment at 1–80 (MNYEGARSER…KPPPRGAGSH (80 aa)) is disordered. Pro residues predominate over residues 56 to 75 (MPPPPPPSPPSDPAQKPPPR). Transmembrane regions (helical) follow at residues 88–108 (LCLFAASQFLLACGVLWFSGY) and 146–166 (LLLVFLSVGLVLVTTLVWHLL). A disordered region spans residues 169–189 (PPEPPTPLPPEDRRQSVSRQP). Serine 245 is subject to Phosphoserine; by PKA. Threonine 255 is subject to Phosphothreonine; by MAPK. Serine 268 is modified (phosphoserine; by MAPK). One can recognise a Tyrosine-protein phosphatase domain in the interval 300–555 (LQAEFFEIPM…QFVHHVMSLY (256 aa)). Residues aspartate 461, 496 to 502 (CSAGIGR), and glutamine 540 contribute to the substrate site. Cysteine 496 serves as the catalytic Phosphocysteine intermediate.

The protein belongs to the protein-tyrosine phosphatase family. Non-receptor class subfamily. In terms of processing, phosphorylation at Ser-245 by PKA deactivates PTPN5. Phosphorylation at Thr-255 and Ser-268 by MAPKs stabilizes the phosphatase, dephosphorylation of these sites results in ubiquitin-mediated degradation of the active phosphatase.

It localises to the endoplasmic reticulum membrane. The enzyme catalyses O-phospho-L-tyrosyl-[protein] + H2O = L-tyrosyl-[protein] + phosphate. Its function is as follows. May regulate the activity of several effector molecules involved in synaptic plasticity and neuronal cell survival, including MAPKs, Src family kinases and NMDA receptors. The chain is Tyrosine-protein phosphatase non-receptor type 5 (PTPN5) from Homo sapiens (Human).